Here is a 140-residue protein sequence, read N- to C-terminus: CDGSH iron-sulfur domain-containing protein 2 homolog (140 aa).

Residues 1–35 (MEAIAKLIKVQLPNYLQKLPVPSSLSGFAELSPSD) lie on the Lumenal side of the membrane. Residues 36–59 (AIAVVFPFAVVSWLIGYSTYKFFQ) form a helical membrane-spanning segment. The Cytoplasmic portion of the chain corresponds to 60 to 140 (PKAVELPPSP…GPLIVKGKAN (81 aa)). The [2Fe-2S] cluster site is built by Cys104, Cys106, Cys115, and His119.

This sequence belongs to the CISD protein family. CISD2 subfamily. Requires [2Fe-2S] cluster as cofactor.

It is found in the endoplasmic reticulum membrane. This chain is CDGSH iron-sulfur domain-containing protein 2 homolog, found in Trichoplax adhaerens (Trichoplax reptans).